Consider the following 113-residue polypeptide: Endoribonuclease SymE (113 aa).

One can recognise a SpoVT-AbrB domain in the interval 29-74; it reads SRYPDYSRIPAITLKGQWLEAAGFATGTAVDVKVMEGCIVLTAQPA.

The protein belongs to the SymE family.

It localises to the cytoplasm. Functionally, involved in the degradation and recycling of damaged RNA. It is itself a target for degradation by the ATP-dependent protease Lon. This Shigella flexneri serotype 5b (strain 8401) protein is Endoribonuclease SymE.